The following is a 184-amino-acid chain: Der GTPase-activating protein YihI (184 aa).

The segment at 1 to 107 (MNRPVKGAAD…VVAAKPTMSP (107 aa)) is disordered. Residues 21–32 (TREELEREARER) show a composition bias toward basic and acidic residues. Over residues 80 to 95 (SAVAKPKPKSKPSAPV) the composition is skewed to low complexity.

It belongs to the YihI family. Interacts with Der.

In terms of biological role, a GTPase-activating protein (GAP) that modifies Der/EngA GTPase function. May play a role in ribosome biogenesis. This chain is Der GTPase-activating protein YihI, found in Pectobacterium carotovorum subsp. carotovorum (strain PC1).